The sequence spans 149 residues: Myoglobin (149 aa).

Ala-2 is modified (N-acetylalanine). Residues 2–143 enclose the Globin domain; that stretch reads ABWDKVNSVW…ICSDIEKEYK (142 aa). Position 89 (His-89) interacts with heme b.

Belongs to the globin family. Monomeric.

It is found in the cytoplasm. Its subcellular location is the sarcoplasm. The enzyme catalyses Fe(III)-heme b-[protein] + nitric oxide + H2O = Fe(II)-heme b-[protein] + nitrite + 2 H(+). It catalyses the reaction H2O2 + AH2 = A + 2 H2O. Functionally, monomeric heme protein which primary function is to store oxygen and facilitate its diffusion within muscle tissues. Reversibly binds oxygen through a pentacoordinated heme iron and enables its timely and efficient release as needed during periods of heightened demand. Depending on the oxidative conditions of tissues and cells, and in addition to its ability to bind oxygen, it also has a nitrite reductase activity whereby it regulates the production of bioactive nitric oxide. Under stress conditions, like hypoxia and anoxia, it also protects cells against reactive oxygen species thanks to its pseudoperoxidase activity. The protein is Myoglobin (mb) of Hemitriakis japanica (Japanese topeshark).